Here is a 156-residue protein sequence, read N- to C-terminus: Enhancer of split M1 protein (156 aa).

A signal peptide spans Met1–Gly19. 2 Kazal-like domains span residues Ser23–Ser81 and Lys96–Cys156. Disulfide bonds link Cys29-Cys62, Cys33-Cys55, Cys102-Cys135, Cys106-Cys128, and Cys114-Cys156.

The sequence is that of Enhancer of split M1 protein (Kaz-m1) from Drosophila melanogaster (Fruit fly).